Consider the following 200-residue polypeptide: Imidazoleglycerol-phosphate dehydratase (200 aa).

It belongs to the imidazoleglycerol-phosphate dehydratase family.

It localises to the cytoplasm. The catalysed reaction is D-erythro-1-(imidazol-4-yl)glycerol 3-phosphate = 3-(imidazol-4-yl)-2-oxopropyl phosphate + H2O. It functions in the pathway amino-acid biosynthesis; L-histidine biosynthesis; L-histidine from 5-phospho-alpha-D-ribose 1-diphosphate: step 6/9. This is Imidazoleglycerol-phosphate dehydratase from Chlorobium luteolum (strain DSM 273 / BCRC 81028 / 2530) (Pelodictyon luteolum).